We begin with the raw amino-acid sequence, 320 residues long: Homoserine kinase (320 aa).

Residue 100–110 (PLSSGMGSSAA) participates in ATP binding.

Belongs to the GHMP kinase family. Homoserine kinase subfamily.

It localises to the cytoplasm. It catalyses the reaction L-homoserine + ATP = O-phospho-L-homoserine + ADP + H(+). It functions in the pathway amino-acid biosynthesis; L-threonine biosynthesis; L-threonine from L-aspartate: step 4/5. In terms of biological role, catalyzes the ATP-dependent phosphorylation of L-homoserine to L-homoserine phosphate. This is Homoserine kinase from Chlorobium phaeobacteroides (strain BS1).